A 249-amino-acid polypeptide reads, in one-letter code: Adenylate kinase (249 aa).

ATP is bound at residue 43-48 (GAGKGT). The tract at residues 63–92 (ATGDMLRAQVAAKSALGVEAKKIMDQGGLV) is NMP. Residues Thr64, Arg69, 90–92 (GLV), 119–122 (GFPR), and Gln126 each bind AMP. Residues 160 to 197 (GRLVHPASGRSYHKLFNPPKKDMIDDVSGDALVQRSDD) are LID. Residues Arg161 and 170–171 (SY) each bind ATP. AMP contacts are provided by Arg194 and Arg205. Residue Gln233 coordinates ATP.

This sequence belongs to the adenylate kinase family. AK2 subfamily. Monomer.

The protein resides in the cytoplasm. Its subcellular location is the cytosol. It localises to the mitochondrion intermembrane space. It carries out the reaction AMP + ATP = 2 ADP. Catalyzes the reversible transfer of the terminal phosphate group between ATP and AMP. Plays an important role in cellular energy homeostasis and in adenine nucleotide metabolism. Adenylate kinase activity is critical for regulation of the phosphate utilization and the AMP de novo biosynthesis pathways. The polypeptide is Adenylate kinase (Debaryomyces hansenii (strain ATCC 36239 / CBS 767 / BCRC 21394 / JCM 1990 / NBRC 0083 / IGC 2968) (Yeast)).